Reading from the N-terminus, the 483-residue chain is Protein nucleotidyltransferase YdiU (483 aa).

ATP contacts are provided by glycine 87, glycine 89, arginine 90, lysine 110, aspartate 122, glycine 123, arginine 173, and arginine 180. Aspartate 249 (proton acceptor) is an active-site residue. Positions 250 and 259 each coordinate Mg(2+). Position 259 (aspartate 259) interacts with ATP.

Belongs to the SELO family. It depends on Mg(2+) as a cofactor. Mn(2+) serves as cofactor.

The catalysed reaction is L-seryl-[protein] + ATP = 3-O-(5'-adenylyl)-L-seryl-[protein] + diphosphate. It catalyses the reaction L-threonyl-[protein] + ATP = 3-O-(5'-adenylyl)-L-threonyl-[protein] + diphosphate. It carries out the reaction L-tyrosyl-[protein] + ATP = O-(5'-adenylyl)-L-tyrosyl-[protein] + diphosphate. The enzyme catalyses L-histidyl-[protein] + UTP = N(tele)-(5'-uridylyl)-L-histidyl-[protein] + diphosphate. The catalysed reaction is L-seryl-[protein] + UTP = O-(5'-uridylyl)-L-seryl-[protein] + diphosphate. It catalyses the reaction L-tyrosyl-[protein] + UTP = O-(5'-uridylyl)-L-tyrosyl-[protein] + diphosphate. Its function is as follows. Nucleotidyltransferase involved in the post-translational modification of proteins. It can catalyze the addition of adenosine monophosphate (AMP) or uridine monophosphate (UMP) to a protein, resulting in modifications known as AMPylation and UMPylation. This chain is Protein nucleotidyltransferase YdiU, found in Pectobacterium carotovorum subsp. carotovorum (strain PC1).